The chain runs to 887 residues: Alanine--tRNA ligase (887 aa).

Positions 575, 579, 677, and 681 each coordinate Zn(2+).

The protein belongs to the class-II aminoacyl-tRNA synthetase family. Requires Zn(2+) as cofactor.

It is found in the cytoplasm. The catalysed reaction is tRNA(Ala) + L-alanine + ATP = L-alanyl-tRNA(Ala) + AMP + diphosphate. Its function is as follows. Catalyzes the attachment of alanine to tRNA(Ala) in a two-step reaction: alanine is first activated by ATP to form Ala-AMP and then transferred to the acceptor end of tRNA(Ala). Also edits incorrectly charged Ser-tRNA(Ala) and Gly-tRNA(Ala) via its editing domain. The protein is Alanine--tRNA ligase of Geobacillus kaustophilus (strain HTA426).